The primary structure comprises 842 residues: ATP-binding cassette sub-family B member 6 (842 aa).

The Lumenal segment spans residues 1-26 (MVTVGNYCEAEGPVGPAWMQDGLSPC). Residues 1–205 (MVTVGNYCEA…SGGLFVLGLW (205 aa)) form a required for the lysosomal targeting region. The segment at 1 to 236 (MVTVGNYCEA…RSQVRSAAQQ (236 aa)) is required for ATPase activity. The N-linked (GlcNAc...) asparagine glycan is linked to N6. C8 and C26 are disulfide-bonded. The helical transmembrane segment at 27–47 (FFFTLVPSTRMALGTLALVLA) threads the bilayer. The Cytoplasmic segment spans residues 48 to 72 (LPCRRRERPAGADSLSWGAGPRISP). A helical transmembrane segment spans residues 73-93 (YVLQLLLATLQAALPLAGLAG). Residues 94–106 (RVGTARGAPLPSY) lie on the Lumenal side of the membrane. Residues 107–127 (LLLASVLESLAGACGLWLLVV) traverse the membrane as a helical segment. Over 128–147 (ERSQARQRLAMGIWIKFRHS) the chain is Cytoplasmic. The helical transmembrane segment at 148–168 (PGLLLLWTVAFAAENLALVSW) threads the bilayer. Over 169–185 (NSPQWWWARADLGQQVQ) the chain is Lumenal. A helical membrane pass occupies residues 186-206 (FSLWVLRYVVSGGLFVLGLWA). The Cytoplasmic portion of the chain corresponds to 207–263 (PGLRPQSYTLQVHEEDQDVERSQVRSAAQQSTWRDFGRKLRLLSGYLWPRGSPALQL). The chain crosses the membrane as a helical span at residues 264–284 (VVLICLGLMGLERALNVLVPI). Positions 265–556 (VLICLGLMGL…FGTYYRMIQT (292 aa)) constitute an ABC transmembrane type-1 domain. Residues 285–291 (FYRNIVN) are Lumenal-facing. The helical transmembrane segment at 292–312 (LLTEKAPWNSLAWTVTSYVFL) threads the bilayer. Topologically, residues 313-375 (KFLQGGGTGS…TGEVLRIADR (63 aa)) are cytoplasmic. The helical transmembrane segment at 376–396 (GTSSVTGLLSYLVFNVIPTLA) threads the bilayer. D397 is a topological domain (lumenal). A helical transmembrane segment spans residues 398–418 (IIIGIIYFSMFFNAWFGLIVF). The Cytoplasmic portion of the chain corresponds to 419–499 (LCMSLYLTLT…SSASLVLLNQ (81 aa)). Residues 500–520 (TQNLVIGLGLLAGSLLCAYFV) form a helical membrane-spanning segment. Topologically, residues 521 to 529 (TEQKLQVGD) are lumenal. Residues 530 to 550 (YVLFGTYIIQLYMPLNWFGTY) traverse the membrane as a helical segment. At 551 to 842 (YRMIQTNFID…EDTKPQTMER (292 aa)) the chain is on the cytoplasmic side. Positions 590-824 (IEFENVHFSY…GGVYADMWQL (235 aa)) constitute an ABC transporter domain. ATP contacts are provided by residues Y599 and 623–634 (GPSGAGKSTILR).

Belongs to the ABC transporter superfamily. ABCB family. Heavy Metal importer (TC 3.A.1.210) subfamily. In terms of assembly, homodimer. Post-translationally, N-glycosylated. As to expression, widely expressed. High expression is detected in the retinal epithelium. Expressed in mature erythrocytes.

It localises to the cell membrane. It is found in the mitochondrion outer membrane. The protein resides in the endoplasmic reticulum membrane. The protein localises to the golgi apparatus membrane. Its subcellular location is the endosome membrane. It localises to the lysosome membrane. It is found in the late endosome membrane. The protein resides in the early endosome membrane. The protein localises to the secreted. Its subcellular location is the extracellular exosome. It localises to the mitochondrion. It is found in the endosome. The protein resides in the multivesicular body membrane. The protein localises to the melanosome membrane. It catalyses the reaction heme b(in) + ATP + H2O = heme b(out) + ADP + phosphate + H(+). The catalysed reaction is coproporphyrin III(in) + ATP + H2O = coproporphyrin III(out) + ADP + phosphate + H(+). It carries out the reaction pheophorbide a(in) + ATP + H2O = pheophorbide a(out) + ADP + phosphate + H(+). The enzyme catalyses coproporphyrinogen III(in) + ATP + H2O = coproporphyrinogen III(out) + ADP + phosphate + H(+). It catalyses the reaction protoporphyrin IX(in) + ATP + H2O = protoporphyrin IX(out) + ADP + phosphate + H(+). The catalysed reaction is coproporphyrin I(in) + ATP + H2O = coproporphyrin I(out) + ADP + phosphate + H(+). It carries out the reaction uroporphyrin I(in) + ATP + H2O = uroporphyrin I(out) + ADP + phosphate + H(+). The enzyme catalyses uroporphyrin III(in) + ATP + H2O = uroporphyrin III(out) + ADP + phosphate + H(+). With respect to regulation, ATPase activity is inhibited by MgATP with an IC(50) of 1.03 mM and up-regulated by coporphyrin III&gt; hemin &gt; protoporphyrin IX. ATPase activity for hemin is up-regulated by glutathione. The ATPase activity is impaired by increasing copper concentrations (0-300 uM). The ATPase activity is stimulated in presence of glutathione for increasing copper concentrations (0-300 uM). In terms of biological role, ATP-dependent transporter that catalyzes the transport of a broad-spectrum of porphyrins from the cytoplasm to the extracellular space through the plasma membrane or into the vesicle lumen. May also function as an ATP-dependent importer of porphyrins from the cytoplasm into the mitochondria, in turn may participate in the de novo heme biosynthesis regulation and in the coordination of heme and iron homeostasis during phenylhydrazine stress. May also play a key role in the early steps of melanogenesis producing PMEL amyloid fibrils. In vitro, it confers to cells a resistance to toxic metal such as arsenic and cadmium and against chemotherapeutics agent such as 5-fluorouracil, SN-38 and vincristin. In addition may play a role in the transition metal homeostasis. The sequence is that of ATP-binding cassette sub-family B member 6 from Homo sapiens (Human).